A 183-amino-acid polypeptide reads, in one-letter code: Small ribosomal subunit protein uS4c (183 aa).

Residues 82–143 enclose the S4 RNA-binding domain; that stretch reads MRLDNILFRL…KQRSKALIQN (62 aa).

It belongs to the universal ribosomal protein uS4 family. In terms of assembly, part of the 30S ribosomal subunit. Contacts protein S5. The interaction surface between S4 and S5 is involved in control of translational fidelity.

It is found in the plastid. The protein localises to the chloroplast. Its function is as follows. One of the primary rRNA binding proteins, it binds directly to 16S rRNA where it nucleates assembly of the body of the 30S subunit. In terms of biological role, with S5 and S12 plays an important role in translational accuracy. The protein is Small ribosomal subunit protein uS4c (rps4) of Babiana stricta (Baboon flower).